We begin with the raw amino-acid sequence, 155 residues long: Fibroblast growth factor 2 (155 aa).

A propeptide spanning residues 1–9 is cleaved from the precursor; it reads MAAGSITTL. Positions 1-20 are disordered; the sequence is MAAGSITTLPALPEDGGSSA. N36 lines the heparin pocket. A Cell attachment site; atypical motif is present at residues 46-48; sequence DGR. Y82 is subject to Phosphotyrosine; by TEC. The short motif at 88–90 is the Cell attachment site; atypical element; the sequence is DGR. K95 is covalently cross-linked (Glycyl lysine isopeptide (Lys-Gly) (interchain with G-Cter in SUMO1)). Residues 128 to 144 form a heparin-binding region; that stretch reads KRTGQYKLGPKTGPGQK.

Belongs to the heparin-binding growth factors family. In terms of assembly, monomer. Homodimer. Interacts with FGFR1, FGFR2, FGFR3 and FGFR4. Affinity between fibroblast growth factors (FGFs) and their receptors is increased by heparan sulfate glycosaminoglycans that function as coreceptors. Interacts with CSPG4, FGFBP1 and TEC. Found in a complex with FGFBP1, FGF1 and FGF2. Interacts with FGFBP3. Interacts with integrin ITGAV:ITGB3; the interaction is required for FGF2 signaling. Interacts with SNORC (via the extracellular domain). Interacts with glypican GPC3. Post-translationally, phosphorylation at Tyr-82 regulates FGF2 unconventional secretion.

The protein resides in the secreted. Its subcellular location is the nucleus. Its function is as follows. Acts as a ligand for FGFR1, FGFR2, FGFR3 and FGFR4. Also acts as an integrin ligand which is required for FGF2 signaling. Binds to integrin ITGAV:ITGB3. Plays an important role in the regulation of cell survival, cell division, cell differentiation and cell migration. Functions as a potent mitogen in vitro. Can induce angiogenesis. Mediates phosphorylation of ERK1/2 and thereby promotes retinal lens fiber differentiation. This Ovis aries (Sheep) protein is Fibroblast growth factor 2 (FGF2).